The primary structure comprises 187 residues: Dihydrofolate reductase (187 aa).

The DHFR domain occupies 4–185 (PLNCIVAVSQ…IKYKFEVYEK (182 aa)). The tract at residues 8 to 37 (IVAVSQNMGIGKNGDFPWPMLRNEFKYFQR) is involved in methotrexate binding. NADP(+) is bound by residues Ala-10 and 16–22 (GIGKNGD). 31–36 (EFKYFQ) contributes to the substrate binding site. Lys-33 is modified (N6-acetyllysine; alternate). Lys-33 is modified (N6-succinyllysine; alternate). 55–57 (RKT) contacts NADP(+). Positions 60-70 (SIPEKNRPLKD) are involved in methotrexate binding. Arg-71 lines the substrate pocket. Residues 77–79 (SRE) and 117–124 (GGSSVYKE) contribute to the NADP(+) site. Residue Thr-137 coordinates methotrexate.

Belongs to the dihydrofolate reductase family. In terms of assembly, homodimer.

The protein localises to the mitochondrion. It is found in the cytoplasm. The enzyme catalyses (6S)-5,6,7,8-tetrahydrofolate + NADP(+) = 7,8-dihydrofolate + NADPH + H(+). The protein operates within cofactor biosynthesis; tetrahydrofolate biosynthesis; 5,6,7,8-tetrahydrofolate from 7,8-dihydrofolate: step 1/1. In terms of biological role, key enzyme in folate metabolism. Contributes to the de novo mitochondrial thymidylate biosynthesis pathway. Catalyzes an essential reaction for de novo glycine and purine synthesis, and for DNA precursor synthesis. Binds its own mRNA. The protein is Dihydrofolate reductase (DHFR) of Mesocricetus auratus (Golden hamster).